The primary structure comprises 637 residues: Clathrin coat assembly protein AP180A (637 aa).

In terms of domain architecture, ENTH spans methionine 1 to tyrosine 126. The disordered stretch occupies residues threonine 555 to methionine 637. Low complexity-rich tracts occupy residues glutamine 560–glutamine 579 and glutamine 600–proline 622. A clathrin-binding region spans residues alanine 587–methionine 637. Over residues valine 623–methionine 637 the composition is skewed to polar residues.

The protein belongs to the AP180 family. In terms of assembly, interacts with PAN1 and the clathrin heavy and light chains CHC1 and CLC1.

The protein localises to the bud. Its subcellular location is the bud neck. It localises to the cell membrane. It is found in the cytoplasm. In terms of biological role, involved in endocytosis and clathrin cage assembly. In Saccharomyces cerevisiae (strain ATCC 204508 / S288c) (Baker's yeast), this protein is Clathrin coat assembly protein AP180A (YAP1801).